The sequence spans 374 residues: Tetraacyldisaccharide 4'-kinase (374 aa).

ATP is bound at residue Thr59 to Thr66.

It belongs to the LpxK family.

The enzyme catalyses a lipid A disaccharide + ATP = a lipid IVA + ADP + H(+). Its pathway is glycolipid biosynthesis; lipid IV(A) biosynthesis; lipid IV(A) from (3R)-3-hydroxytetradecanoyl-[acyl-carrier-protein] and UDP-N-acetyl-alpha-D-glucosamine: step 6/6. Its function is as follows. Transfers the gamma-phosphate of ATP to the 4'-position of a tetraacyldisaccharide 1-phosphate intermediate (termed DS-1-P) to form tetraacyldisaccharide 1,4'-bis-phosphate (lipid IVA). This is Tetraacyldisaccharide 4'-kinase from Elusimicrobium minutum (strain Pei191).